Here is a 163-residue protein sequence, read N- to C-terminus: MIFHTGTTKPTLVLLCCIGTWLATCSLSFGAPISKEDLRTTIDLLKQESQDLYNNYSIKQASGMSADESIQLPCFSLDREALTNISVIIAHLEKVKVLSENTVDTSWVIRWLTNISCFNPLNLNISVPGNTDESYDCKVFVLTVLKQFSNCMAELQAKDNTTC.

The N-terminal stretch at 1–23 (MIFHTGTTKPTLVLLCCIGTWLA) is a signal peptide. N55, N84, and N124 each carry an N-linked (GlcNAc...) asparagine glycan.

It is found in the secreted. In terms of biological role, activates STAT3 and possibly STAT1 and STAT5 through the IL31 heterodimeric receptor composed of IL31RA and OSMR. May function in skin immunity. Enhances myeloid progenitor cell survival in vitro. Induces RETNLA and serum amyloid A protein expression in macrophages. The polypeptide is Interleukin-31 (Il31) (Mus musculus (Mouse)).